Reading from the N-terminus, the 89-residue chain is Small ribosomal subunit protein uS15 (89 aa).

The protein belongs to the universal ribosomal protein uS15 family. Part of the 30S ribosomal subunit. Forms a bridge to the 50S subunit in the 70S ribosome, contacting the 23S rRNA.

In terms of biological role, one of the primary rRNA binding proteins, it binds directly to 16S rRNA where it helps nucleate assembly of the platform of the 30S subunit by binding and bridging several RNA helices of the 16S rRNA. Forms an intersubunit bridge (bridge B4) with the 23S rRNA of the 50S subunit in the ribosome. This chain is Small ribosomal subunit protein uS15, found in Shewanella sp. (strain ANA-3).